A 156-amino-acid polypeptide reads, in one-letter code: Small ribosomal subunit protein uS7 (156 aa).

This sequence belongs to the universal ribosomal protein uS7 family. Part of the 30S ribosomal subunit. Contacts proteins S9 and S11.

One of the primary rRNA binding proteins, it binds directly to 16S rRNA where it nucleates assembly of the head domain of the 30S subunit. Is located at the subunit interface close to the decoding center, probably blocks exit of the E-site tRNA. The sequence is that of Small ribosomal subunit protein uS7 from Vibrio campbellii (strain ATCC BAA-1116).